The following is a 663-amino-acid chain: Protein pat-12 (663 aa).

Residues 1–15 (MTSHIATETSVNRWS) show a composition bias toward polar residues. 4 disordered regions span residues 1–78 (MTSH…SGDY), 367–430 (RFEE…GQET), 517–546 (FRRGSQQQVSPFVEFPPTLPRRGGGGDYRR), and 597–663 (PMPA…RRRR). Positions 367–380 (RFEETRRTEEVERR) are enriched in basic and acidic residues. Positions 381 to 400 (VQRREKKERRSRHHSSSRHH) are enriched in basic residues. Over residues 517 to 526 (FRRGSQQQVS) the composition is skewed to polar residues. 2 stretches are compositionally biased toward basic and acidic residues: residues 620–640 (FNKERHANSGRRSGRDGKPVD) and 649–663 (NYKREQTLNDDRRRR).

Interacts with vab-10 (via plankin domain). In terms of tissue distribution, isoform a: Expressed in the uterus, the vulva, the rectum, mechanosensory neurons and in head and tail neurons. Isoform e: Expressed in spermatheca and weakly in the vulva. Isoform f: Expressed in spermatheca and weakly in the vulva. Isoform i: Expressed in spermatheca and weakly in the vulva.

It is found in the apical cell membrane. Its subcellular location is the basal cell membrane. The protein localises to the cytoplasm. It localises to the cell junction. The protein resides in the hemidesmosome. It is found in the cell membrane. Its subcellular location is the cytoskeleton. Functionally, required for embryonic morphology and development. Plays both a functional and a structural role in the maintenance and probably biogenesis of fibrous organelles, a hemidesomosome-like junction structure, which ensures muscle stability and muscle connection to the external cuticle. The polypeptide is Protein pat-12 (Caenorhabditis elegans).